The primary structure comprises 533 residues: Flavin-containing monooxygenase 5 (533 aa).

Arg-5 is modified (dimethylated arginine). Residues 10 to 14, Glu-33, and 41 to 42 each bind FAD; these read GGGVS and LW. Ser-54 is modified (phosphoserine). Tyr-56 is subject to Phosphotyrosine. At Ser-58 the chain carries Phosphoserine. 62-63 provides a ligand contact to FAD; sequence NT. 196–199 contacts NADP(+); the sequence is SGGD. The residue at position 280 (Ser-280) is a Phosphoserine. Thr-284 is modified (phosphothreonine). Ser-401 is subject to Phosphoserine. The helical transmembrane segment at 513–533 threads the bilayer; sequence TMTIGKFMLALAFFAIIIAYF.

It belongs to the FMO family. Requires FAD as cofactor. As to expression, expressed in fetal and adult liver.

The protein localises to the microsome membrane. The protein resides in the endoplasmic reticulum membrane. The catalysed reaction is N,N-dimethylaniline + NADPH + O2 + H(+) = N,N-dimethylaniline N-oxide + NADP(+) + H2O. The enzyme catalyses NADPH + O2 + H(+) = H2O2 + NADP(+). It carries out the reaction heptan-2-one + NADPH + O2 + H(+) = pentyl acetate + NADP(+) + H2O. It catalyses the reaction octan-3-one + NADPH + O2 + H(+) = pentyl propanoate + NADP(+) + H2O. The catalysed reaction is octan-3-one + NADPH + O2 + H(+) = ethyl hexanoate + NADP(+) + H2O. The enzyme catalyses hexan-3-one + NADPH + O2 + H(+) = ethyl butanoate + NADP(+) + H2O. It carries out the reaction hexan-3-one + NADPH + O2 + H(+) = propyl propanoate + NADP(+) + H2O. It catalyses the reaction heptan-4-one + NADPH + O2 + H(+) = propyl butanoate + NADP(+) + H2O. The catalysed reaction is (2E)-geranial + NADPH + O2 + H(+) = (1E)-2,6-dimethylhepta-1,5-dien-1-yl formate + NADP(+) + H2O. The enzyme catalyses sulcatone + NADPH + O2 + H(+) = 4-methylpent-3-en-1-yl acetate + NADP(+) + H2O. Its function is as follows. Acts as a Baeyer-Villiger monooxygenase on a broad range of substrates. Catalyzes the insertion of an oxygen atom into a carbon-carbon bond adjacent to a carbonyl, which converts ketones to esters. Active on diverse carbonyl compounds, whereas soft nucleophiles are mostly non- or poorly reactive. In contrast with other forms of FMO it is non- or poorly active on 'classical' substrates such as drugs, pesticides, and dietary components containing soft nucleophilic heteroatoms. Able to oxidize drug molecules bearing a carbonyl group on an aliphatic chain, such as nabumetone and pentoxifylline. Also, in the absence of substrates, shows slow but yet significant NADPH oxidase activity. Acts as a positive modulator of cholesterol biosynthesis as well as glucose homeostasis, promoting metabolic aging via pleiotropic effects. The polypeptide is Flavin-containing monooxygenase 5 (Homo sapiens (Human)).